Here is a 471-residue protein sequence, read N- to C-terminus: A-type ATP synthase subunit B (471 aa).

It belongs to the ATPase alpha/beta chains family. In terms of assembly, has multiple subunits with at least A(3), B(3), C, D, E, F, H, I and proteolipid K(x).

It localises to the cell membrane. Its function is as follows. Component of the A-type ATP synthase that produces ATP from ADP in the presence of a proton gradient across the membrane. The B chain is a regulatory subunit. In Natronomonas pharaonis (strain ATCC 35678 / DSM 2160 / CIP 103997 / JCM 8858 / NBRC 14720 / NCIMB 2260 / Gabara) (Halobacterium pharaonis), this protein is A-type ATP synthase subunit B.